Consider the following 159-residue polypeptide: Cytochrome b6-f complex subunit 4 (159 aa).

Helical transmembrane passes span 35 to 55, 93 to 113, and 127 to 147; these read ILIF…LAVL, LLGV…PFIE, and ATAV…GAMI.

The protein belongs to the cytochrome b family. PetD subfamily. In terms of assembly, the 4 large subunits of the cytochrome b6-f complex are cytochrome b6, subunit IV (17 kDa polypeptide, PetD), cytochrome f and the Rieske protein, while the 4 small subunits are PetG, PetL, PetM and PetN. The complex functions as a dimer.

The protein resides in the cell inner membrane. Functionally, component of the cytochrome b6-f complex, which mediates electron transfer between photosystem II (PSII) and photosystem I (PSI), cyclic electron flow around PSI, and state transitions. The sequence is that of Cytochrome b6-f complex subunit 4 from Gloeobacter violaceus (strain ATCC 29082 / PCC 7421).